The chain runs to 266 residues: Putative [LysW]-aminoadipate/[LysW]-glutamate kinase (266 aa).

Substrate-binding positions include 36 to 37, R63, and N168; that span reads GG.

It belongs to the acetylglutamate kinase family. LysZ subfamily.

It localises to the cytoplasm. It catalyses the reaction [amino-group carrier protein]-C-terminal-N-(1,4-dicarboxybutan-1-yl)-L-glutamine + ATP = [amino-group carrier protein]-C-terminal-N-(1-carboxy-5-phosphooxy-5-oxopentan-1-yl)-L-glutamine + ADP. The enzyme catalyses [amino-group carrier protein]-C-terminal-gamma-(L-glutamyl)-L-glutamate + ATP = [amino-group carrier protein]-C-terminal-gamma-(5-phospho-L-glutamyl)-L-glutamate + ADP. It functions in the pathway amino-acid biosynthesis; L-lysine biosynthesis via AAA pathway; L-lysine from L-alpha-aminoadipate (Thermus route): step 2/5. Its pathway is amino-acid biosynthesis; L-arginine biosynthesis. Its function is as follows. Involved in both the arginine and lysine biosynthetic pathways. Phosphorylates the LysW-bound precursors glutamate (for arginine biosynthesis), respectively alpha-aminoadipate (for lysine biosynthesis). The chain is Putative [LysW]-aminoadipate/[LysW]-glutamate kinase from Cenarchaeum symbiosum (strain A).